The following is a 206-amino-acid chain: 2-phospho-L-lactate guanylyltransferase (206 aa).

This sequence belongs to the CofC family. In terms of assembly, homodimer.

The catalysed reaction is (2S)-2-phospholactate + GTP + H(+) = (2S)-lactyl-2-diphospho-5'-guanosine + diphosphate. The protein operates within cofactor biosynthesis; coenzyme F420 biosynthesis. Guanylyltransferase that catalyzes the activation of (2S)-2-phospholactate (2-PL) as (2S)-lactyl-2-diphospho-5'-guanosine, via the condensation of 2-PL with GTP. It is involved in the biosynthesis of coenzyme F420, a hydride carrier cofactor. The chain is 2-phospho-L-lactate guanylyltransferase from Archaeoglobus fulgidus (strain ATCC 49558 / DSM 4304 / JCM 9628 / NBRC 100126 / VC-16).